The following is a 514-amino-acid chain: RNA-splicing ligase RtcB homolog (514 aa).

Residues D128, C131, H236, H268, and H362 each contribute to the Mn(2+) site. N235–E239 is a binding site for GMP. Residues H362–N363, G411–M414, S418, H437–G440, and K513 each bind GMP. The GMP-histidine intermediate role is filled by H437.

It belongs to the RtcB family. As to quaternary structure, catalytic component of the tRNA-splicing ligase complex. It depends on Mn(2+) as a cofactor.

The enzyme catalyses a 3'-end 3'-phospho-ribonucleotide-RNA + a 5'-end dephospho-ribonucleoside-RNA + GTP = a ribonucleotidyl-ribonucleotide-RNA + GMP + diphosphate. The catalysed reaction is a 3'-end 2',3'-cyclophospho-ribonucleotide-RNA + a 5'-end dephospho-ribonucleoside-RNA + GTP + H2O = a ribonucleotidyl-ribonucleotide-RNA + GMP + diphosphate + H(+). Functionally, catalytic subunit of the tRNA-splicing ligase complex that acts by directly joining spliced tRNA halves to mature-sized tRNAs by incorporating the precursor-derived splice junction phosphate into the mature tRNA as a canonical 3',5'-phosphodiester. May act as an RNA ligase with broad substrate specificity, and may function toward other RNAs. This Ostreococcus lucimarinus (strain CCE9901) protein is RNA-splicing ligase RtcB homolog.